A 217-amino-acid polypeptide reads, in one-letter code: 3,4-dihydroxy-2-butanone 4-phosphate synthase (217 aa).

Residues 37–38 (RE), Asp42, 150–154 (RGGHT), and Glu174 each bind D-ribulose 5-phosphate. Glu38 contacts Mg(2+). His153 provides a ligand contact to Mg(2+).

Belongs to the DHBP synthase family. As to quaternary structure, homodimer. It depends on Mg(2+) as a cofactor. Mn(2+) serves as cofactor.

It carries out the reaction D-ribulose 5-phosphate = (2S)-2-hydroxy-3-oxobutyl phosphate + formate + H(+). The protein operates within cofactor biosynthesis; riboflavin biosynthesis; 2-hydroxy-3-oxobutyl phosphate from D-ribulose 5-phosphate: step 1/1. Functionally, catalyzes the conversion of D-ribulose 5-phosphate to formate and 3,4-dihydroxy-2-butanone 4-phosphate. The protein is 3,4-dihydroxy-2-butanone 4-phosphate synthase of Salmonella heidelberg (strain SL476).